The following is a 102-amino-acid chain: Large ribosomal subunit protein eL31 (102 aa).

It belongs to the eukaryotic ribosomal protein eL31 family.

In Staphylothermus marinus (strain ATCC 43588 / DSM 3639 / JCM 9404 / F1), this protein is Large ribosomal subunit protein eL31.